A 319-amino-acid chain; its full sequence is Pantothenate kinase (319 aa).

97–104 (GSVAVGKS) is an ATP binding site.

It belongs to the prokaryotic pantothenate kinase family.

The protein localises to the cytoplasm. It catalyses the reaction (R)-pantothenate + ATP = (R)-4'-phosphopantothenate + ADP + H(+). It participates in cofactor biosynthesis; coenzyme A biosynthesis; CoA from (R)-pantothenate: step 1/5. This Chelativorans sp. (strain BNC1) protein is Pantothenate kinase.